Here is a 555-residue protein sequence, read N- to C-terminus: 5'-nucleotidase-related protein (555 aa).

The first 25 residues, 1–25 (MKSLIGTLGLYCLFILTNNVVSSYG), serve as a signal peptide directing secretion. Residues aspartate 38, histidine 40, and aspartate 91 each coordinate a divalent metal cation. Asparagine 105 carries an N-linked (GlcNAc...) asparagine glycan. Asparagine 123 contacts a divalent metal cation. Asparagine 198 is a glycosylation site (N-linked (GlcNAc...) asparagine). A divalent metal cation-binding residues include histidine 225 and histidine 249. A glycan (N-linked (GlcNAc...) asparagine) is linked at asparagine 295. AMP is bound by residues arginine 358, arginine 402, and phenylalanine 421. Asparagine 465 carries N-linked (GlcNAc...) asparagine glycosylation. Positions 505 and 511 each coordinate AMP.

This sequence belongs to the 5'-nucleotidase family. Mg(2+) is required as a cofactor. The cofactor is Mn(2+). As to expression, salivary gland (at protein level). Saliva (at protein level).

Its subcellular location is the secreted. The catalysed reaction is a ribonucleoside 5'-triphosphate + 2 H2O = a ribonucleoside 5'-phosphate + 2 phosphate + 2 H(+). DEPC (2 mM), sodium fluoride (10 mM) and 4,4'-Diisothiocyano-2,2'-stilbenedisulfonic acid (DIDS, 100 uM) nearly completely abrogate activity. Concanavalin A enhances activity. Functionally, facilitates hematophagy by inhibiting ADP-dependent platelet aggregation and promoting disaggregation of ADP-stimulated platelets in the host. Cleaves adenosine triphosphate (ATP) and adenosine diphosphate (ADP) to adenosine monophosphate (AMP) and inorganic phosphate. Interacts with fibrinogen receptor integrin alpha-IIb/beta-3 (ITGA2B/ITGB3). The polypeptide is 5'-nucleotidase-related protein (Glossina morsitans morsitans (Savannah tsetse fly)).